The sequence spans 446 residues: Probable glycine dehydrogenase (decarboxylating) subunit 1 (446 aa).

It belongs to the GcvP family. N-terminal subunit subfamily. As to quaternary structure, the glycine cleavage system is composed of four proteins: P, T, L and H. In this organism, the P 'protein' is a heterodimer of two subunits.

The enzyme catalyses N(6)-[(R)-lipoyl]-L-lysyl-[glycine-cleavage complex H protein] + glycine + H(+) = N(6)-[(R)-S(8)-aminomethyldihydrolipoyl]-L-lysyl-[glycine-cleavage complex H protein] + CO2. Functionally, the glycine cleavage system catalyzes the degradation of glycine. The P protein binds the alpha-amino group of glycine through its pyridoxal phosphate cofactor; CO(2) is released and the remaining methylamine moiety is then transferred to the lipoamide cofactor of the H protein. The polypeptide is Probable glycine dehydrogenase (decarboxylating) subunit 1 (Methylocella silvestris (strain DSM 15510 / CIP 108128 / LMG 27833 / NCIMB 13906 / BL2)).